The following is a 120-amino-acid chain: Large ribosomal subunit protein uL18 (120 aa).

It belongs to the universal ribosomal protein uL18 family. As to quaternary structure, part of the 50S ribosomal subunit; part of the 5S rRNA/L5/L18/L25 subcomplex. Contacts the 5S and 23S rRNAs.

In terms of biological role, this is one of the proteins that bind and probably mediate the attachment of the 5S RNA into the large ribosomal subunit, where it forms part of the central protuberance. The sequence is that of Large ribosomal subunit protein uL18 from Chloroflexus aggregans (strain MD-66 / DSM 9485).